The sequence spans 20 residues: Dentinal fluid transport-stimulating peptide (20 aa).

Residues 1–20 (GVIAWELQHNEPGRKDSTAG) are disordered. Basic and acidic residues predominate over residues 8-20 (QHNEPGRKDSTAG).

In terms of biological role, this peptide stimulates the transport of dentinal fluid, which is important for the prevention of dental caries. This Rattus norvegicus (Rat) protein is Dentinal fluid transport-stimulating peptide.